A 308-amino-acid chain; its full sequence is Mycothiol acetyltransferase (308 aa).

N-acetyltransferase domains follow at residues 16-152 (ETLA…RPLA) and 165-308 (VTVR…RTES). Glu-47 serves as a coordination point for 1D-myo-inositol 2-(L-cysteinylamino)-2-deoxy-alpha-D-glucopyranoside. 91–93 (LVV) lines the acetyl-CoA pocket. 1D-myo-inositol 2-(L-cysteinylamino)-2-deoxy-alpha-D-glucopyranoside contacts are provided by Glu-192, Lys-231, and Glu-240. Acetyl-CoA-binding positions include 244 to 246 (LGV) and 251 to 257 (QGGGLGK). Tyr-278 serves as a coordination point for 1D-myo-inositol 2-(L-cysteinylamino)-2-deoxy-alpha-D-glucopyranoside.

Belongs to the acetyltransferase family. MshD subfamily. Monomer.

The enzyme catalyses 1D-myo-inositol 2-(L-cysteinylamino)-2-deoxy-alpha-D-glucopyranoside + acetyl-CoA = mycothiol + CoA + H(+). Catalyzes the transfer of acetyl from acetyl-CoA to desacetylmycothiol (Cys-GlcN-Ins) to form mycothiol. The sequence is that of Mycothiol acetyltransferase from Streptomyces avermitilis (strain ATCC 31267 / DSM 46492 / JCM 5070 / NBRC 14893 / NCIMB 12804 / NRRL 8165 / MA-4680).